A 602-amino-acid chain; its full sequence is tRNA uridine 5-carboxymethylaminomethyl modification enzyme MnmG (602 aa).

10–15 serves as a coordination point for FAD; sequence GGGHAG. The disordered stretch occupies residues 217 to 242; it reads DPQPRGFTGRPGPRAAESPTWQTHTT. NAD(+) is bound at residue 267 to 281; sequence GPRYCPSIEDKVVRF.

Belongs to the MnmG family. As to quaternary structure, homodimer. Heterotetramer of two MnmE and two MnmG subunits. FAD is required as a cofactor.

It localises to the cytoplasm. Functionally, NAD-binding protein involved in the addition of a carboxymethylaminomethyl (cmnm) group at the wobble position (U34) of certain tRNAs, forming tRNA-cmnm(5)s(2)U34. The sequence is that of tRNA uridine 5-carboxymethylaminomethyl modification enzyme MnmG from Deinococcus geothermalis (strain DSM 11300 / CIP 105573 / AG-3a).